The primary structure comprises 248 residues: uncharacterized protein (248 aa).

The protein belongs to the glycosyltransferase 2 family.

This is an uncharacterized protein from Acanthamoeba polyphaga (Amoeba).